Here is a 616-residue protein sequence, read N- to C-terminus: Alpha terpineol synthase, chloroplastic (616 aa).

Residues M1 to M41 constitute a chloroplast transit peptide. D367, D371, and D519 together coordinate Mg(2+). A DDXXD motif motif is present at residues D367–D371.

It belongs to the terpene synthase family. Tpsd subfamily. Mg(2+) is required as a cofactor. It depends on Mn(2+) as a cofactor.

Its subcellular location is the plastid. It is found in the chloroplast. It carries out the reaction (2E)-geranyl diphosphate + H2O = (S)-alpha-terpineol + diphosphate. The enzyme catalyses (2E)-geranyl diphosphate + H2O = 1,8-cineole + diphosphate. It catalyses the reaction (2E)-geranyl diphosphate = beta-myrcene + diphosphate. The catalysed reaction is (2E)-geranyl diphosphate = (1S,5S)-sabinene + diphosphate. Its pathway is terpene metabolism; oleoresin biosynthesis. It participates in secondary metabolite biosynthesis; terpenoid biosynthesis. Monoterpene synthase (TPS) involved in the biosynthesis of monoterpene natural products included in conifer oleoresin secretions and volatile emissions; these compounds contribute to biotic and abiotic stress defense against herbivores and pathogens. Catalyzes the conversion of (2E)-geranyl diphosphate (GPP) to alpha-terpineol and, to a lower extent, to 1,8-cineole, myrcene and (-)-sabinene. This chain is Alpha terpineol synthase, chloroplastic, found in Pinus contorta (Shore pine).